A 67-amino-acid chain; its full sequence is uncharacterized protein (67 aa).

This is an uncharacterized protein from Bacillus subtilis (strain 168).